Consider the following 741-residue polypeptide: Protein O-mannosyl-transferase TMTC4 (741 aa).

Topologically, residues Met1 to His10 are cytoplasmic. Residues Ile11–Leu31 form a helical membrane-spanning segment. The Extracellular portion of the chain corresponds to Cys32–Asn110. Residue Asn77 is glycosylated (N-linked (GlcNAc...) asparagine). A helical transmembrane segment spans residues Ile111–Gly131. At Leu132 to Arg146 the chain is on the cytoplasmic side. 2 helical membrane passes run Ala147–Ala166 and Gly167–Leu185. The Cytoplasmic segment spans residues Gly186–Glu198. A helical membrane pass occupies residues Gly199–Leu219. Topologically, residues Cys220 to Gly224 are extracellular. The helical transmembrane segment at Ile225–Leu245 threads the bilayer. At Ala246–Lys265 the chain is on the cytoplasmic side. Residues Asn266 to Ile286 form a helical membrane-spanning segment. The Extracellular segment spans residues Arg287–Arg354. A helical transmembrane segment spans residues Val355–Ser375. Residues Glu376–Arg382 lie on the Cytoplasmic side of the membrane. The helical transmembrane segment at Ile383–Phe403 threads the bilayer. Topologically, residues Arg404 to Arg412 are extracellular. Residues Val413–Ser433 traverse the membrane as a helical segment. Residues Arg434–Pro441 lie on the Cytoplasmic side of the membrane. The helical transmembrane segment at Val442–Gly462 threads the bilayer. Residues Glu463 to Val741 are Extracellular-facing. TPR repeat units follow at residues Ala482–Tyr515, Val516–Phe549, Ala550–Tyr583, Pro584–His617, Ser618–Asp651, His652–Val685, and Ala686–Ala719. N-linked (GlcNAc...) asparagine glycosylation is present at Asn497. The N-linked (GlcNAc...) asparagine glycan is linked to Asn609. Residue Asn725 is glycosylated (N-linked (GlcNAc...) asparagine).

This sequence belongs to the TMTC family.

Its subcellular location is the membrane. The protein localises to the endoplasmic reticulum. It carries out the reaction a di-trans,poly-cis-dolichyl beta-D-mannosyl phosphate + L-seryl-[protein] = 3-O-(alpha-D-mannosyl)-L-seryl-[protein] + a di-trans,poly-cis-dolichyl phosphate + H(+). The enzyme catalyses a di-trans,poly-cis-dolichyl beta-D-mannosyl phosphate + L-threonyl-[protein] = 3-O-(alpha-D-mannosyl)-L-threonyl-[protein] + a di-trans,poly-cis-dolichyl phosphate + H(+). It functions in the pathway protein modification; protein glycosylation. Its function is as follows. Transfers mannosyl residues to the hydroxyl group of serine or threonine residues. The 4 members of the TMTC family are O-mannosyl-transferases dedicated primarily to the cadherin superfamily, each member seems to have a distinct role in decorating the cadherin domains with O-linked mannose glycans at specific regions. Also acts as O-mannosyl-transferase on other proteins such as PDIA3. The sequence is that of Protein O-mannosyl-transferase TMTC4 from Mus musculus (Mouse).